Here is a 360-residue protein sequence, read N- to C-terminus: Peptide chain release factor 1 (360 aa).

An N5-methylglutamine modification is found at Gln-235.

Belongs to the prokaryotic/mitochondrial release factor family. Post-translationally, methylated by PrmC. Methylation increases the termination efficiency of RF1.

It localises to the cytoplasm. Its function is as follows. Peptide chain release factor 1 directs the termination of translation in response to the peptide chain termination codons UAG and UAA. The protein is Peptide chain release factor 1 of Burkholderia multivorans (strain ATCC 17616 / 249).